We begin with the raw amino-acid sequence, 182 residues long: MSEIEVFDAEQLAGLIEGLAEAIGRDHPHLQKLTLIGIRTRGVPLAYRLRDRIATLLGIPPQVGELDITFFRDDLSAGGLRTPDRSEMPRDLTGQEVVLVDDVIFRGRTVRAALEALNHFGRPERVRLAVLIDRGHRQFPIQPDYCGCQLSTEPEQTVRVHLRETDAEERVLLIDKTAKIKS.

A PRPP-binding motif is present at residues 97–109 (VVLVDDVIFRGRT).

The protein belongs to the purine/pyrimidine phosphoribosyltransferase family. PyrR subfamily.

The catalysed reaction is UMP + diphosphate = 5-phospho-alpha-D-ribose 1-diphosphate + uracil. Functionally, regulates the transcription of the pyrimidine nucleotide (pyr) operon in response to exogenous pyrimidines. In terms of biological role, also displays a weak uracil phosphoribosyltransferase activity which is not physiologically significant. This Synechococcus sp. (strain JA-2-3B'a(2-13)) (Cyanobacteria bacterium Yellowstone B-Prime) protein is Bifunctional protein PyrR.